The sequence spans 496 residues: Probable cytosol aminopeptidase (496 aa).

Mn(2+) contacts are provided by lysine 266 and aspartate 271. Residue lysine 278 is part of the active site. Positions 289, 348, and 350 each coordinate Mn(2+). Arginine 352 is a catalytic residue.

It belongs to the peptidase M17 family. It depends on Mn(2+) as a cofactor.

It is found in the cytoplasm. The enzyme catalyses Release of an N-terminal amino acid, Xaa-|-Yaa-, in which Xaa is preferably Leu, but may be other amino acids including Pro although not Arg or Lys, and Yaa may be Pro. Amino acid amides and methyl esters are also readily hydrolyzed, but rates on arylamides are exceedingly low.. The catalysed reaction is Release of an N-terminal amino acid, preferentially leucine, but not glutamic or aspartic acids.. Presumably involved in the processing and regular turnover of intracellular proteins. Catalyzes the removal of unsubstituted N-terminal amino acids from various peptides. The polypeptide is Probable cytosol aminopeptidase (Pseudomonas syringae pv. tomato (strain ATCC BAA-871 / DC3000)).